Here is a 386-residue protein sequence, read N- to C-terminus: Phosphoglycerate kinase (386 aa).

Substrate is bound by residues 21–23 (DLN), Arg-36, 59–62 (HLGR), Arg-113, and Arg-146. Residues Lys-197, Glu-314, and 340–343 (GGDT) contribute to the ATP site.

Belongs to the phosphoglycerate kinase family. In terms of assembly, monomer.

The protein resides in the cytoplasm. It carries out the reaction (2R)-3-phosphoglycerate + ATP = (2R)-3-phospho-glyceroyl phosphate + ADP. It functions in the pathway carbohydrate degradation; glycolysis; pyruvate from D-glyceraldehyde 3-phosphate: step 2/5. This Vibrio vulnificus (strain CMCP6) protein is Phosphoglycerate kinase.